A 55-amino-acid chain; its full sequence is Conotoxin Cal22b (55 aa).

Residues 1-5 (GRPSA) constitute a propeptide that is removed on maturation.

Post-translationally, contains 4 disulfide bonds. In terms of tissue distribution, expressed by the venom duct.

It localises to the secreted. Probable neurotoxin with unknown target. Possibly targets ion channels. This Californiconus californicus (California cone) protein is Conotoxin Cal22b.